Reading from the N-terminus, the 124-residue chain is Phosphoribosyl-AMP cyclohydrolase (124 aa).

Residue Asp-82 coordinates Mg(2+). Position 83 (Cys-83) interacts with Zn(2+). 2 residues coordinate Mg(2+): Asp-84 and Asp-86. Zn(2+)-binding residues include Cys-99 and Cys-106.

Belongs to the PRA-CH family. In terms of assembly, homodimer. The cofactor is Mg(2+). Requires Zn(2+) as cofactor.

The protein localises to the cytoplasm. The enzyme catalyses 1-(5-phospho-beta-D-ribosyl)-5'-AMP + H2O = 1-(5-phospho-beta-D-ribosyl)-5-[(5-phospho-beta-D-ribosylamino)methylideneamino]imidazole-4-carboxamide. It functions in the pathway amino-acid biosynthesis; L-histidine biosynthesis; L-histidine from 5-phospho-alpha-D-ribose 1-diphosphate: step 3/9. Functionally, catalyzes the hydrolysis of the adenine ring of phosphoribosyl-AMP. The polypeptide is Phosphoribosyl-AMP cyclohydrolase (Zymomonas mobilis subsp. mobilis (strain ATCC 31821 / ZM4 / CP4)).